We begin with the raw amino-acid sequence, 725 residues long: Peroxisomal fatty acid beta-oxidation multifunctional protein MFP2 (725 aa).

Glu-119 (nucleophile) is an active-site residue. The Proton acceptor role is filled by Glu-139. Residues 723–725 (SRL) carry the Microbody targeting signal motif.

The protein in the N-terminal section; belongs to the enoyl-CoA hydratase/isomerase family. This sequence in the central section; belongs to the 3-hydroxyacyl-CoA dehydrogenase family. As to expression, highly expressed in senescing leaves and at lower levels in flowers and siliques.

The protein resides in the glyoxysome. It localises to the peroxisome. It carries out the reaction a (3S)-3-hydroxyacyl-CoA = a (2E)-enoyl-CoA + H2O. The enzyme catalyses a 4-saturated-(3S)-3-hydroxyacyl-CoA = a (3E)-enoyl-CoA + H2O. The catalysed reaction is (3S)-3-hydroxybutanoyl-CoA = (2E)-butenoyl-CoA + H2O. It catalyses the reaction (3S)-hydroxyoctanoyl-CoA = (2E)-octenoyl-CoA + H2O. It carries out the reaction (3S)-3-hydroxydodecanoyl-CoA = (2E)-dodecenoyl-CoA + H2O. The enzyme catalyses (3S)-hydroxytetradecanoyl-CoA = (2E)-tetradecenoyl-CoA + H2O. The catalysed reaction is (3S)-hydroxyhexanoyl-CoA = (2E)-hexenoyl-CoA + H2O. It catalyses the reaction a (3Z)-enoyl-CoA = a 4-saturated (2E)-enoyl-CoA. It carries out the reaction a (3E)-enoyl-CoA = a 4-saturated (2E)-enoyl-CoA. The enzyme catalyses (3S)-3-hydroxybutanoyl-CoA = (3R)-3-hydroxybutanoyl-CoA. The catalysed reaction is a (3S)-3-hydroxyacyl-CoA + NAD(+) = a 3-oxoacyl-CoA + NADH + H(+). It catalyses the reaction (3S)-3-hydroxybutanoyl-CoA + NAD(+) = acetoacetyl-CoA + NADH + H(+). It carries out the reaction (3S)-hydroxyhexanoyl-CoA + NAD(+) = 3-oxohexanoyl-CoA + NADH + H(+). The enzyme catalyses (3S)-hydroxyoctanoyl-CoA + NAD(+) = 3-oxooctanoyl-CoA + NADH + H(+). The catalysed reaction is (3S)-3-hydroxydodecanoyl-CoA + NAD(+) = 3-oxododecanoyl-CoA + NADH + H(+). It catalyses the reaction (3S)-hydroxytetradecanoyl-CoA + NAD(+) = 3-oxotetradecanoyl-CoA + NADH + H(+). Its pathway is lipid metabolism; fatty acid beta-oxidation. In terms of biological role, involved in peroxisomal fatty acid beta-oxidation during seed germination. Possesses enoyl-CoA hydratase activity against long chain substrates (C14-C18) and 3-hydroxyacyl-CoA dehydrogenase activity against chains of variable sizes (C6-C18). Possesses 3-hydroxy-3-phenylpropionyl-CoA dehydrogenase activity and is involved in the peroxisomal beta-oxidation pathway for the biosynthesis of benzoic acid (BA). Required for the accumulation in seeds of substituted hydroxybenzoylated choline esters, which are BA-containing secondary metabolites. Fatty acid beta-oxidation pathway in peroxisomes regulates gene silencing, histone acetylation and DNA methylation. The polypeptide is Peroxisomal fatty acid beta-oxidation multifunctional protein MFP2 (Arabidopsis thaliana (Mouse-ear cress)).